Reading from the N-terminus, the 395-residue chain is Transcription termination/antitermination protein NusA (395 aa).

Positions 137–201 (NSVLMGQVIL…TKKGLLLELS (65 aa)) constitute an S1 motif domain. 2 consecutive KH domains span residues 243–291 (SHNA…TLAL) and 331–378 (KVRL…NESE).

Belongs to the NusA family. In terms of assembly, monomer. Binds directly to the core enzyme of the DNA-dependent RNA polymerase and to nascent RNA.

The protein resides in the cytoplasm. In terms of biological role, participates in both transcription termination and antitermination. The chain is Transcription termination/antitermination protein NusA from Helicobacter pylori (strain ATCC 700392 / 26695) (Campylobacter pylori).